The chain runs to 91 residues: Small ribosomal subunit protein uS19 (91 aa).

This sequence belongs to the universal ribosomal protein uS19 family.

Its function is as follows. Protein S19 forms a complex with S13 that binds strongly to the 16S ribosomal RNA. The protein is Small ribosomal subunit protein uS19 of Prochlorococcus marinus (strain MIT 9515).